The chain runs to 138 residues: MSTIHVDVVSATESLYSGEVSCVFAPASTGELGIYPKHTALLSILKPGEVRVETDKGVESIYISGGIIEVQPDVVTIFSDTAIRADNLDESKALEAKQRAQEAIENATESQDISAIQVALAESIAQLQMINKIRSKKI.

The protein belongs to the ATPase epsilon chain family. As to quaternary structure, F-type ATPases have 2 components, CF(1) - the catalytic core - and CF(0) - the membrane proton channel. CF(1) has five subunits: alpha(3), beta(3), gamma(1), delta(1), epsilon(1). CF(0) has three main subunits: a, b and c.

It is found in the cell inner membrane. Functionally, produces ATP from ADP in the presence of a proton gradient across the membrane. This chain is ATP synthase epsilon chain, found in Ruthia magnifica subsp. Calyptogena magnifica.